The following is a 613-amino-acid chain: AP-5 complex subunit mu (613 aa).

In terms of domain architecture, MHD spans 309-563 (KQRLLFTIHE…DYAKVSFKIV (255 aa)). Positions 501 to 522 (SPLQSRRKGDGDDEESEDESAE) are disordered. The segment covering 511-521 (GDDEESEDESA) has biased composition (acidic residues).

The protein belongs to the adaptor complexes medium subunit family. As to quaternary structure, probably part of the adaptor protein complex 5 (AP-5).

It is found in the cytoplasmic vesicle membrane. The chain is AP-5 complex subunit mu (AP5M) from Arabidopsis thaliana (Mouse-ear cress).